Reading from the N-terminus, the 725-residue chain is Kinesin-like protein KIF2C (725 aa).

An N-acetylalanine modification is found at alanine 2. The interval 2–254 (AMDSSLQARL…CHPLTMTDPI (253 aa)) is globular. A phosphoserine mark is found at serine 6 and serine 22. Residues 89–116 (QKQKRRSVNSKIPAPKESLRSRSTRMST) are disordered. Position 95 is a phosphoserine; by AURKB (serine 95). Positions 98 to 101 (SKIP) match the Microtubule tip localization signal motif. A phosphoserine mark is found at serine 106, serine 109, serine 111, serine 115, serine 166, serine 175, serine 187, and serine 192. Residues 207-238 (EKKAQNSEMRMKRAQEYDSSFPNWEFARMIKE) form a negative regulator of microtubule-binding region. The 331-residue stretch at 258–588 (RICVCVRKRP…LRYADRVKEL (331 aa)) folds into the Kinesin motor domain. Residues arginine 264 and 348-355 (GQTGSGKT) contribute to the ATP site. Positions 415-418 (KKAK) match the Nuclear localization signal motif. Residues serine 519, serine 621, and serine 633 each carry the phosphoserine modification. Residues 618–658 (GNLSKEEEELSSQMSSFNEAMTQIRELEEKAMEELKEIIQQ) adopt a coiled-coil conformation.

The protein belongs to the TRAFAC class myosin-kinesin ATPase superfamily. Kinesin family. MCAK/KIF2 subfamily. Interacts with CENPH. Interacts with MTUS2/TIP150; the interaction is direct. Interacts with MAPRE1; the interaction is direct, regulated by phosphorylation and is probably required for targeting to growing microtubule plus ends. Interacts with KIF18B at microtubule tips; this interaction increases the affinity of both partners for microtubule plus ends and is required for robust microtubule depolymerization. Phosphorylation by AURKA or AURKB strongly reduces KIF18B-binding. In terms of processing, phosphorylation by AURKB, regulates association with centromeres and kinetochores and the microtubule depolymerization activity. Ubiquitinated. In terms of tissue distribution, expressed at high levels in thymus and testis, at low levels in small intestine, the mucosal lining of colon, and placenta, and at very low levels in spleen and ovary; expression is not detected in prostate, peripheral blood Leukocytes, heart, brain, lung, liver, skeletal muscle, kidney or pancreas. Isoform 2 is testis-specific.

The protein localises to the cytoplasm. The protein resides in the cytoskeleton. Its subcellular location is the nucleus. It localises to the chromosome. It is found in the centromere. The protein localises to the kinetochore. Its function is as follows. In complex with KIF18B, constitutes the major microtubule plus-end depolymerizing activity in mitotic cells. Regulates the turnover of microtubules at the kinetochore and functions in chromosome segregation during mitosis. Plays a role in chromosome congression and is required for the lateral to end-on conversion of the chromosome-microtubule attachment. This is Kinesin-like protein KIF2C (KIF2C) from Homo sapiens (Human).